The chain runs to 125 residues: MAEKPPYVKFEVPEELANKVYELVRKARETGKIRKGTNETTKAVERGQAKLVIIAENVNPPEIVMHLPALCEEKGVPYVYVPSKEELGKAAGINVSAASAAIIDAGEAKDLLEEIIRSVQELKAK.

It belongs to the eukaryotic ribosomal protein eL8 family. Part of the 50S ribosomal subunit. Probably part of the RNase P complex.

It localises to the cytoplasm. In terms of biological role, multifunctional RNA-binding protein that recognizes the K-turn motif in ribosomal RNA, the RNA component of RNase P, box H/ACA, box C/D and box C'/D' sRNAs. The sequence is that of Large ribosomal subunit protein eL8 from Nanoarchaeum equitans (strain Kin4-M).